Consider the following 573-residue polypeptide: MQWLKSFQICKVLQGFSLSPTQLHRRLFSRVGAPRWNDHDSPEEFNFASDVLDYWAQMEEEGKRGPSPAFWWVNGQGDEIKWSFRKLRDLTCRTANVFEQICGLQQGDHLALILPRVPEWWLVTVGCMRTGIIFMPGTTQLKAKDILYRIQISRAKAIVTTASLVPEVESVASECPDLKTKLVVSDHSHEGWLDFCSLIKSASPDHTCIKSKMKDPMAIFFTSGTTGYPKMAKHNQGLAFRSYIPSCRKLLKLKTSDILWCMSDPGWILATVGCLIEPWTSGCTVFIHHLPQFDPKVIVEVLFKYPITQCLAAPGVYRMVLQQKTSNLRFPTLEHCTTGGESLLPEEYEQWKQRTGLSIHEVYGQSETGISSATLREMKIKRGSIGKAILPFDLQIIDEKGNILPPNTEGYIGIRIKPTRPLGLFMEYENSPESTSEVECGDFYNSGDRATIDEEGYIWFLGRGDDVINASGYRIGPVEVENALAEHPAVAESAVVSSPDKDRGEVVKAFIVLNPEFLSHDQEQLIKELQHHVKSVTAPYKYPRKVEFVSELPKTVTGKIKRKELRNKEFGQL.

The N-terminal 35 residues, M1 to R35, are a transit peptide targeting the mitochondrion. Residue K81 is modified to N6-succinyllysine. At K142 the chain carries N6-acetyllysine; alternate. K142 is subject to N6-succinyllysine; alternate. K179 carries the post-translational modification N6-succinyllysine. The residue at position 200 (K200) is an N6-acetyllysine; alternate. Residue K200 is modified to N6-succinyllysine; alternate. Position 210 is an N6-acetyllysine (K210). T222 to K230 contacts ATP. N6-succinyllysine occurs at positions 233 and 324. K352 and K387 each carry N6-acetyllysine; alternate. An N6-succinyllysine; alternate mark is found at K352 and K387. ATP-binding residues include D448 and R463. Position 501 is an N6-succinyllysine (K501). K527 carries the N6-acetyllysine modification. K534 is subject to N6-acetyllysine; alternate. N6-succinyllysine; alternate is present on K534. K545 is modified (N6-acetyllysine). K559 is an ATP binding site.

It belongs to the ATP-dependent AMP-binding enzyme family. In terms of assembly, monomer. Mg(2+) serves as cofactor. The cofactor is Mn(2+). Highly expressed in liver and kidney.

Its subcellular location is the mitochondrion matrix. It localises to the mitochondrion. The catalysed reaction is a medium-chain fatty acid + ATP + CoA = a medium-chain fatty acyl-CoA + AMP + diphosphate. It carries out the reaction benzoate + ATP + CoA = benzoyl-CoA + AMP + diphosphate. It catalyses the reaction (R)-lipoate + GTP + H(+) = (R)-lipoyl-GMP + diphosphate. The enzyme catalyses octanoate + ATP + CoA = octanoyl-CoA + AMP + diphosphate. The catalysed reaction is decanoate + ATP + CoA = decanoyl-CoA + AMP + diphosphate. It carries out the reaction dodecanoate + ATP + CoA = dodecanoyl-CoA + AMP + diphosphate. It catalyses the reaction tetradecanoate + ATP + CoA = tetradecanoyl-CoA + AMP + diphosphate. The enzyme catalyses hexanoate + ATP + CoA = hexanoyl-CoA + AMP + diphosphate. The catalysed reaction is butanoate + ATP + CoA = butanoyl-CoA + AMP + diphosphate. It carries out the reaction hexadecanoate + ATP + CoA = hexadecanoyl-CoA + AMP + diphosphate. Functionally, catalyzes the activation of fatty acids by CoA to produce an acyl-CoA, the first step in fatty acid metabolism. Capable of activating medium-chain fatty acids (e.g. butyric (C4) to decanoic (C10) acids), and certain carboxylate-containing xenobiotics, e.g. benzoate. Also catalyzes the activation of lipoate to lipoyl-nucleoside monophosphate. Activates lipoate with GTP at a 1000-fold higher rate than with ATP and activates both (R)- and (S)-lipoate to the respective lipoyl-GMP, with a preference for (R)-lipoate. In Mus musculus (Mouse), this protein is Acyl-coenzyme A synthetase ACSM1, mitochondrial (Acsm1).